The following is a 203-amino-acid chain: Ribosome maturation factor RimP (203 aa).

The disordered stretch occupies residues 183-203 (FDDIETEGSAEGTTGSEEENK).

Belongs to the RimP family.

The protein localises to the cytoplasm. In terms of biological role, required for maturation of 30S ribosomal subunits. In Ruegeria sp. (strain TM1040) (Silicibacter sp.), this protein is Ribosome maturation factor RimP.